A 235-amino-acid polypeptide reads, in one-letter code: Phosphoribosylaminoimidazole-succinocarboxamide synthase (235 aa).

Belongs to the SAICAR synthetase family.

It carries out the reaction 5-amino-1-(5-phospho-D-ribosyl)imidazole-4-carboxylate + L-aspartate + ATP = (2S)-2-[5-amino-1-(5-phospho-beta-D-ribosyl)imidazole-4-carboxamido]succinate + ADP + phosphate + 2 H(+). Its pathway is purine metabolism; IMP biosynthesis via de novo pathway; 5-amino-1-(5-phospho-D-ribosyl)imidazole-4-carboxamide from 5-amino-1-(5-phospho-D-ribosyl)imidazole-4-carboxylate: step 1/2. This Caldanaerobacter subterraneus subsp. tengcongensis (strain DSM 15242 / JCM 11007 / NBRC 100824 / MB4) (Thermoanaerobacter tengcongensis) protein is Phosphoribosylaminoimidazole-succinocarboxamide synthase.